The sequence spans 518 residues: AarF domain-containing kinase 1 (518 aa).

The 320-residue stretch at Ser-149–Ala-468 folds into the Protein kinase domain. ATP contacts are provided by residues Leu-155–Val-163 and Lys-177. Asp-309 (proton acceptor) is an active-site residue.

The protein belongs to the protein kinase superfamily. ADCK protein kinase family.

It localises to the mitochondrion. Its function is as follows. Essential for maintaining mitochondrial cristae formation and mitochondrial function by acting via YME1L to regulate the mitochondrial structural proteins Opa1 and Mitofilin. This function is likely to be kinase-independent. Functions in tracheal development and larval molting probably by acting in sterol modification and/or intracellular lipid trafficking. The action of this enzyme is not yet clear. It is not known if it has protein kinase activity and what type of substrate it would phosphorylate (Ser, Thr or Tyr). This Drosophila melanogaster (Fruit fly) protein is AarF domain-containing kinase 1.